A 643-amino-acid chain; its full sequence is MSDMINITFPDGAVKEFPKGTTTEDIAASISPGLKKKSLAGKLNGQEIDLRTPIQEDGAVEIITEGTEEGLNIMRHSTAHLLAQAIKRIYKDVKFGVGPVIENGFYYDVEMEQALTPDDLPKIEKEMKRIVGENLPIIRKEVSRDEAKAMFAEIGDNLKLELLDAIPEDETVSIYEQGEFFDLCRGVHVPSTGKIKEFKLLSLAGAYWRGDSKNQMLQRIYGTAFFKKDDLKEHLRMLEEAKERDHRKLGKELKLFANSQKVGQGLPLWLPKGATIRRVIERYIVDKELSLGYEHVYTPVLGSKDLYETSGHWDHYQDTMFPPMEMDNETLVLRPMNCPHHMMIYKQDIHSYRELPIRIAELGTMHRYEMSGALSGLQRVRGMTLNDAHIFVRPDQIKEEFIRTVRLIQDVYEDFGLNDYTFRLSYRDPEDTEKYFDDDEMWNKAQSMLKAAMDEMGHDYYEAEGEAAFYGPKLDVQVKTAIGKEETLSTVQLDFLLPERFDLTYVGEDGKQHRPVVIHRGVVSTMERFVAFLIEEHKGALPTWLAPVQFQVIPVSPSVHLDYAKKVQERLQREGLRVELDSRDEKIGYKIREAQMQKIPYMLVVGDQEAENGAVNVRKYGEQKSETVSLDDFVKKAVAEAKK.

The TGS domain occupies 3–64; that stretch reads DMINITFPDG…QEDGAVEIIT (62 aa). Positions 245–542 are catalytic; sequence DHRKLGKELK…LIEEHKGALP (298 aa). Residues Cys-338, His-389, and His-519 each coordinate Zn(2+).

Belongs to the class-II aminoacyl-tRNA synthetase family. In terms of assembly, homodimer. Zn(2+) is required as a cofactor.

The protein localises to the cytoplasm. The enzyme catalyses tRNA(Thr) + L-threonine + ATP = L-threonyl-tRNA(Thr) + AMP + diphosphate + H(+). In terms of biological role, catalyzes the attachment of threonine to tRNA(Thr) in a two-step reaction: L-threonine is first activated by ATP to form Thr-AMP and then transferred to the acceptor end of tRNA(Thr). Also edits incorrectly charged L-seryl-tRNA(Thr). The sequence is that of Threonine--tRNA ligase from Bacillus velezensis (strain DSM 23117 / BGSC 10A6 / LMG 26770 / FZB42) (Bacillus amyloliquefaciens subsp. plantarum).